The following is a 481-amino-acid chain: Glutamyl-tRNA(Gln) amidotransferase subunit A (481 aa).

Residues Lys-74 and Ser-149 each act as charge relay system in the active site. The active-site Acyl-ester intermediate is Ser-173.

It belongs to the amidase family. GatA subfamily. As to quaternary structure, heterotrimer of A, B and C subunits.

The catalysed reaction is L-glutamyl-tRNA(Gln) + L-glutamine + ATP + H2O = L-glutaminyl-tRNA(Gln) + L-glutamate + ADP + phosphate + H(+). Its function is as follows. Allows the formation of correctly charged Gln-tRNA(Gln) through the transamidation of misacylated Glu-tRNA(Gln) in organisms which lack glutaminyl-tRNA synthetase. The reaction takes place in the presence of glutamine and ATP through an activated gamma-phospho-Glu-tRNA(Gln). The chain is Glutamyl-tRNA(Gln) amidotransferase subunit A from Francisella tularensis subsp. holarctica (strain FTNF002-00 / FTA).